The chain runs to 229 residues: MLSTLAKRFASGKKDRMVVFFGPPGVGKGTQAKLLEKEFNLYQISTGDALRAEIRGQTPLGKRVKGIIESGGLVDDDTIMDILQACMQKNTDNNGYIFDGIPRTIGQVEKLDALLAKMGTPLTHVLYLSVNIDELRERVCGRLFHPGSGRVYHKVTNPPKKPMTDDITGEPLIIRKDDTPEVFNQRMNQYFGTFQPCIDYYSKKGILQTFPVDGQPIDVVHKKLHAALQ.

The propeptide occupies 1–9; it reads MLSTLAKRF. 25–30 is an ATP binding site; the sequence is GVGKGT. The NMP stretch occupies residues 45–74; that stretch reads STGDALRAEIRGQTPLGKRVKGIIESGGLV. Residues Thr46, Arg51, 72–74, 100–103, and Gln107 contribute to the AMP site; these read GLV and GIPR. An LID region spans residues 141-178; the sequence is GRLFHPGSGRVYHKVTNPPKKPMTDDITGEPLIIRKDD. Residue Arg142 participates in ATP binding. AMP-binding residues include Arg175 and Arg186. ATP is bound at residue Gly214.

It belongs to the adenylate kinase family.

Its subcellular location is the hydrogenosome. It catalyses the reaction AMP + ATP = 2 ADP. Catalyzes the reversible transfer of the terminal phosphate group between ATP and AMP. Plays an important role in cellular energy homeostasis and in adenine nucleotide metabolism. In Trichomonas vaginalis, this protein is Adenylate kinase.